Here is a 338-residue protein sequence, read N- to C-terminus: Peptidoglycan deacetylase-like protein FGM2 (338 aa).

3 residues coordinate Zn(2+): Asp-49, His-124, and His-128. The 193-residue stretch at 65–257 (LSDYSAGIFA…VTNSHGFVSS (193 aa)) folds into the NodB homology domain.

The protein belongs to the polysaccharide deacetylase family.

In terms of biological role, peptidoglycan deacetylase-like protein; part of the Fg3_54/C64 gene cluster that mediates the biosynthesis of the octapeptide fusaoctaxin A, a virulence factor that is required for cell-to-cell invasiveness of plant host. The 2 nonribosomal peptide synthetases NRPS9 and NRPS5 form an assembly line which likely utilizes GABA as a starter unit (loaded on the unique module M1 of NRPS9) and sequentially incorporates seven extender units composed of the residues L-Ala, L-allo-Ile, L-Ser, L-Val, L-Ser, L-Leu and L-Leu, respectively. During the process, each of the residues that are tethered on modules M3-M7 of NRPS5 containing an E domain can undergo an epimerization reaction to produce a D-configuration before the transpeptidation reaction occurs. The elongation of the peptidyl chain might be terminated by module M8-mediated L-Leu incorporation, followed by R domain-catalyzed 4 electron reduction to release the resulting octapeptide from the assembly line as an alcohol. Fusaoctaxin A is cleaved by the cluster specific ABC transporter FGM5 to the pentapeptide fusapentaxin A and the tripeptide fusatrixin A. The other enzymes from the cluster, FGM1, FGM2, FGM3 and FGM9 seem not to be involved in the biosynthesis of fusaoctaxin A and their functions have still to be determined. The sequence is that of Peptidoglycan deacetylase-like protein FGM2 from Gibberella zeae (strain ATCC MYA-4620 / CBS 123657 / FGSC 9075 / NRRL 31084 / PH-1) (Wheat head blight fungus).